The primary structure comprises 705 residues: Prolyl endopeptidase (705 aa).

A signal peptide spans 1–20; sequence MKYKKLSVAVAAFAFAAVSA. Catalysis depends on charge relay system residues Ser556 and His675.

Belongs to the peptidase S9A family. In terms of assembly, monomer.

It localises to the periplasm. It catalyses the reaction Hydrolysis of Pro-|-Xaa &gt;&gt; Ala-|-Xaa in oligopeptides.. Cleaves peptide bonds on the C-terminal side of prolyl residues within peptides that are up to approximately 30 amino acids long. Has an absolute requirement for an X-Pro bond in the trans configuration immediately preceding the Pro-Y scissible bond. In Elizabethkingia miricola (Chryseobacterium miricola), this protein is Prolyl endopeptidase.